The sequence spans 136 residues: MARTKQTARKSTGGKAPRKQLASKAARKSAPVTGGVKKPHRYKPGTVALREIRRFQKSTELLIRKLPFQRLVREIAQDFKSDLRFQSSAIGALQEAVEAYLVSLFEDTNLCAIHAKRVTIQKKDIQLARRLRGERS.

The interval 1–41 is disordered; sequence MARTKQTARKSTGGKAPRKQLASKAARKSAPVTGGVKKPHR. Lysine 5 carries the post-translational modification N6,N6,N6-trimethyllysine; alternate. Position 5 is an N6,N6-dimethyllysine; alternate (lysine 5). Residues lysine 5 and lysine 10 each carry the N6-methyllysine; alternate modification. Residue lysine 10 is modified to N6-acetyllysine; alternate. Serine 11 carries the post-translational modification Phosphoserine. Residue lysine 15 is modified to N6,N6-dimethyllysine; alternate. 5 positions are modified to N6-acetyllysine; alternate: lysine 15, lysine 19, lysine 24, lysine 28, and lysine 37. An N6-methyllysine; alternate mark is found at lysine 19, lysine 24, lysine 28, and lysine 37. An N6,N6,N6-trimethyllysine; alternate mark is found at lysine 28 and lysine 37. An N6,N6-dimethyllysine; alternate mark is found at lysine 28 and lysine 37. N6-acetyllysine is present on residues lysine 57 and lysine 65. The residue at position 80 (lysine 80) is an N6,N6,N6-trimethyllysine; alternate. Lysine 80 is subject to N6,N6-dimethyllysine; alternate. Lysine 80 bears the N6-methyllysine; alternate mark.

It belongs to the histone H3 family. As to quaternary structure, the nucleosome is a histone octamer containing two molecules each of H2A, H2B, H3 and H4 assembled in one H3-H4 heterotetramer and two H2A-H2B heterodimers. The octamer wraps approximately 147 bp of DNA. In terms of processing, phosphorylated to form H3S10ph. H3S10ph promotes subsequent H3K14ac formation and is required for transcriptional activation through TBP recruitment to the promoters. Mono-, di- and trimethylated by the COMPASS complex to form H3K4me1/2/3. H3K4me activates gene expression by regulating transcription elongation and plays a role in telomere length maintenance. H3K4me enrichment correlates with transcription levels, and occurs in a 5' to 3' gradient with H3K4me3 enrichment at the 5'-end of genes, shifting to H3K4me2 and then H3K4me1. Methylated by SET2 to form H3K36me. H3K36me represses gene expression. Methylated by DOT1 to form H3K79me. H3K79me is required for association of SIR proteins with telomeric regions and for telomeric silencing. The COMPASS-mediated formation of H3K4me2/3 and the DOT1-mediated formation of H3K79me require H2BK123ub1. Post-translationally, acetylation of histone H3 leads to transcriptional activation. H3K14ac formation by GCN5 is promoted by H3S10ph. H3K14ac can also be formed by ESA1. H3K56ac formation occurs predominantly in newly synthesized H3 molecules during G1, S and G2/M of the cell cycle and may be involved in DNA repair.

It is found in the nucleus. The protein localises to the chromosome. Core component of nucleosome. Nucleosomes wrap and compact DNA into chromatin, limiting DNA accessibility to the cellular machineries which require DNA as a template. Histones thereby play a central role in transcription regulation, DNA repair, DNA replication and chromosomal stability. DNA accessibility is regulated via a complex set of post-translational modifications of histones, also called histone code, and nucleosome remodeling. This is Histone H3.3 (HHT3) from Meyerozyma guilliermondii (strain ATCC 6260 / CBS 566 / DSM 6381 / JCM 1539 / NBRC 10279 / NRRL Y-324) (Yeast).